We begin with the raw amino-acid sequence, 1749 residues long: Intraflagellar transport protein 172 homolog (1749 aa).

M1 carries the N-acetylmethionine modification. K4 participates in a covalent cross-link: Glycyl lysine isopeptide (Lys-Gly) (interchain with G-Cter in SUMO1). WD repeat units follow at residues 14–53 (DGAA…RDKF), 64–103 (RKSY…GDKK), 110–148 (IQTS…SSTI), 150–191 (GTES…ESQG), 195–233 (NHPC…QTFD), 238–278 (PQER…WEEA), 284–323 (TNLY…SIYK), 483–520 (SHES…CSKT), and 521–559 (MILN…ERVT). One copy of the TPR 1 repeat lies at 593–624 (DEGLIEFGTAIDDGNYIRATAFLETLEMTPET). Residue R672 is modified to Omega-N-methylarginine. TPR repeat units follow at residues 692–725 (EKNY…DECI), 809–842 (GELY…MKAV), 854–887 (VKLE…IKAI), 912–945 (SKYY…KDAI), 947–970 (MYTQ…PEDV), 971–1004 (SVLY…DLAI), 1042–1075 (EGRL…EEAY), 1142–1175 (PEVH…KEAV), 1276–1309 (VEGF…GNSG), 1345–1378 (IGKH…NKAK), 1411–1445 (GVDV…LHKY), 1447–1477 (ALYA…NPQN), and 1574–1607 (DKAF…TDAI).

The protein belongs to the IFT172 family. In terms of assembly, interacts with IFT88. Interacts with IFT57. Interacts with RABL2/RABL2A; binds preferentially to GDP-bound RABL2.

The protein resides in the cell projection. The protein localises to the cilium. Functionally, required for the maintenance and formation of cilia. Plays an indirect role in hedgehog (Hh) signaling, cilia being required for all activity of the hedgehog pathway. The sequence is that of Intraflagellar transport protein 172 homolog (IFT172) from Homo sapiens (Human).